Consider the following 148-residue polypeptide: Lysozyme C (148 aa).

The first 18 residues, 1–18, serve as a signal peptide directing secretion; it reads MKAVIILGLVLLSVTVQG. The region spanning 19 to 148 is the C-type lysozyme domain; that stretch reads KIFERCELAR…VSQYVQGCGV (130 aa). 4 disulfide bridges follow: Cys24-Cys146, Cys48-Cys134, Cys83-Cys99, and Cys95-Cys113. Residues Glu53 and Asp71 contribute to the active site.

It belongs to the glycosyl hydrolase 22 family. As to quaternary structure, monomer.

Its subcellular location is the secreted. It carries out the reaction Hydrolysis of (1-&gt;4)-beta-linkages between N-acetylmuramic acid and N-acetyl-D-glucosamine residues in a peptidoglycan and between N-acetyl-D-glucosamine residues in chitodextrins.. Lysozymes have primarily a bacteriolytic function; those in tissues and body fluids are associated with the monocyte-macrophage system and enhance the activity of immunoagents. This Papio anubis (Olive baboon) protein is Lysozyme C (LYZ).